We begin with the raw amino-acid sequence, 109 residues long: uncharacterized protein (109 aa).

Positions 77–98 (TRTGHAYPRFTRPSFPSCNRNG) are disordered.

This is an uncharacterized protein from Homo sapiens (Human).